The sequence spans 377 residues: MAAAVRFRVVRALPMSRPAITAAATSVFCGSSHRQLHHAVIPHGKGGRSSVSGVVATVFGATGFLGRYVVNHLGRMGSQVIIPYRCDVYDIMHLRLMGDLGQLTFLEWDARDKDSIRKAVQHSNVVINLIGREWETRNFDFEDVFVNIPRAIAQASKEAGVERFIHVSHLNASMKSSSKSLRSKAVGEKEVRSVFPEAIIIRPSDIFGREDRFLNHFANYRWFLAVPLVSLGFKTVKQPVYVADVSKGIVNATKDPDAVGKTFAFTGPNRYLLFHLVKYIFGMTHRTFIPYPLPLFVYSWIGKLFGLSPFEPWTTKDKVERIHISDVMPTDLPGLEDLGVQPTPLELKSIEVLRRHRTYRWLSSEIEETKPAKTVNY.

The transit peptide at M1–Q35 directs the protein to the mitochondrion. At K175 the chain carries N6-succinyllysine. An N6-acetyllysine mark is found at K189 and K370.

It belongs to the complex I NDUFA9 subunit family. In terms of assembly, complex I is composed of 45 different subunits. This a component of the hydrophobic protein fraction. Interacts with BLOC1S1. Interacts with SLC2A4. Interacts with CLOCK. Interacts with RAB5IF. The cofactor is FAD. Acetylated on lysine residues. BLOC1S1 is required for acetylation. Acetylated by CLOCK in a circadian manner.

The protein resides in the mitochondrion matrix. Its function is as follows. Accessory subunit of the mitochondrial membrane respiratory chain NADH dehydrogenase (Complex I), that is believed not to be involved in catalysis. Complex I functions in the transfer of electrons from NADH to the respiratory chain. The immediate electron acceptor for the enzyme is believed to be ubiquinone. This chain is NADH dehydrogenase [ubiquinone] 1 alpha subcomplex subunit 9, mitochondrial (Ndufa9), found in Mus musculus (Mouse).